A 151-amino-acid polypeptide reads, in one-letter code: uncharacterized protein (151 aa).

The interval 123 to 151 is disordered; sequence PAGQNAGTGPAQKLKTDETRCYERRGGSQ. Residues 136–151 are compositionally biased toward basic and acidic residues; the sequence is LKTDETRCYERRGGSQ.

This is an uncharacterized protein from Triticum aestivum (Wheat).